The primary structure comprises 71 residues: uncharacterized protein (71 aa).

The helical transmembrane segment at 24 to 44 (FGGGGLSTAIYSIFAFFSIPL) threads the bilayer.

It localises to the membrane. This is an uncharacterized protein from Schizosaccharomyces pombe (strain 972 / ATCC 24843) (Fission yeast).